Consider the following 632-residue polypeptide: Nucleoside triphosphatase I (632 aa).

One can recognise a Helicase ATP-binding domain in the interval 42 to 204 (FLGLDKMHSL…IMLVNLLRPK (163 aa)). 55–62 (HETGVGKT) is an ATP binding site. The short motif at 141 to 144 (DECH) is the DEXH box element. In terms of domain architecture, Helicase C-terminal spans 367–532 (KFTDVCLRIL…EFTQLFKVFK (166 aa)). The segment at 457–524 (DIFILDMTWN…DIIRNKSKEF (68 aa)) is binding to the cap-specific mRNA (nucleoside-2'-O-)-methyltransferase.

The protein belongs to the helicase family. NPH I subfamily. Monomer. Interacts (via C-terminus) with RAP94 (via N-terminus). Interacts with the cap-specific mRNA (nucleoside-2'-O-)-methyltransferase.

Its subcellular location is the virion. It catalyses the reaction a ribonucleoside 5'-triphosphate + H2O = a ribonucleoside 5'-diphosphate + phosphate + H(+). Functionally, DNA-dependent ATPase required for providing the needed energy to achieve the termination of early transcripts. Acts in concert with the RAP94 subunit of the virion RNA polymerase and the capping enzyme/VTF to catalyze release of UUUUUNU-containing nascent RNA from the elongation complex. NPH-I must bind ssDNA in order to exhibit ATPase activity. This Rabbit fibroma virus (strain Kasza) (RFV) protein is Nucleoside triphosphatase I (NPH1).